We begin with the raw amino-acid sequence, 308 residues long: Putative mitochondrial transporter UCP3 (308 aa).

Over 1–10 the chain is Mitochondrial intermembrane; that stretch reads MVGLQPSEVP. A helical transmembrane segment spans residues 11 to 32; sequence PTTVVKFLGAGTAACFADLLTF. Solcar repeat units lie at residues 11 to 102, 111 to 202, and 211 to 296; these read PTTV…VKQF, SSVA…IKEK, and DNFP…LKRA. Residues 33-73 are Mitochondrial matrix-facing; sequence PLDTAKVRLQIQGENPGAQSVQYRGVLGTILTMVRTEGPRS. The chain crosses the membrane as a helical span at residues 74–96; it reads PYSGLVAGLHRQMSFASIRIGLY. Residues 97-116 are Mitochondrial intermembrane-facing; it reads DSVKQFYTPKGADHSSVAIR. Residues 117 to 133 traverse the membrane as a helical segment; that stretch reads ILAGCTTGAMAVTCAQP. At 134 to 179 the chain is on the mitochondrial matrix side; sequence TDVVKVRFQAMIRLGTGGERKYRGTMDAYRTIAREEGVRGLWKGTW. A helical membrane pass occupies residues 180–196; it reads PNITRNAIVNCAEMVTY. Residues 197–213 lie on the Mitochondrial intermembrane side of the membrane; sequence DIIKEKLLESHLFTDNF. The chain crosses the membrane as a helical span at residues 214-233; the sequence is PCHFVSAFGAGFCATVVASP. Residues 234 to 267 are Mitochondrial matrix-facing; sequence VDVVKTRYMNAPLGRYRSPLHCMLKMVAQEGPTA. A helical membrane pass occupies residues 268–290; it reads FYKGFVPSFLRLGAWNVMMFVTY. A purine nucleotide binding region spans residues 275–297; it reads SFLRLGAWNVMMFVTYEQLKRAL. Topologically, residues 291–308 are mitochondrial intermembrane; sequence EQLKRALMKVQVLRESPF.

Belongs to the mitochondrial carrier (TC 2.A.29) family. In terms of assembly, interacts with HAX1; the interaction is direct and calcium-dependent.

The protein resides in the mitochondrion inner membrane. With respect to regulation, inhibited by purine nucleotides and inorganic phosphate (in vitro). Functionally, putative transmembrane transporter that plays a role in mitochondrial metabolism via an as yet unclear mechanism. Originally, this mitochondrial protein was thought to act as a proton transmembrane transporter from the mitochondrial intermembrane space into the matrix, causing proton leaks through the inner mitochondrial membrane, thereby uncoupling mitochondrial membrane potential generation from ATP synthesis. However, this function is controversial and uncoupling may not be the function, or at least not the main function, but rather a consequence of more conventional metabolite transporter activity. The polypeptide is Putative mitochondrial transporter UCP3 (Mus musculus (Mouse)).